We begin with the raw amino-acid sequence, 118 residues long: Cell division protein FtsB (118 aa).

Over Met-1–Leu-3 the chain is Cytoplasmic. Residues Leu-4 to Leu-21 form a helical membrane-spanning segment. The Periplasmic segment spans residues Gly-22–Arg-118. Positions Lys-28–Thr-62 form a coiled coil. The tract at residues Leu-88–Arg-118 is disordered. Polar residues predominate over residues Pro-95 to Ala-105. The span at Pro-109–Arg-118 shows a compositional bias: pro residues.

The protein belongs to the FtsB family. As to quaternary structure, part of a complex composed of FtsB, FtsL and FtsQ.

It is found in the cell inner membrane. Essential cell division protein. May link together the upstream cell division proteins, which are predominantly cytoplasmic, with the downstream cell division proteins, which are predominantly periplasmic. This is Cell division protein FtsB from Bordetella bronchiseptica (strain ATCC BAA-588 / NCTC 13252 / RB50) (Alcaligenes bronchisepticus).